The chain runs to 189 residues: UPF0301 protein RF_0044 (189 aa).

This sequence belongs to the UPF0301 (AlgH) family.

The chain is UPF0301 protein RF_0044 from Rickettsia felis (strain ATCC VR-1525 / URRWXCal2) (Rickettsia azadi).